A 416-amino-acid chain; its full sequence is Serine hydroxymethyltransferase (416 aa).

Residues Leu118 and 122 to 124 (GHL) contribute to the (6S)-5,6,7,8-tetrahydrofolate site. Lys227 is modified (N6-(pyridoxal phosphate)lysine). (6S)-5,6,7,8-tetrahydrofolate is bound by residues Glu242 and 350 to 352 (SPF).

This sequence belongs to the SHMT family. In terms of assembly, homodimer. The cofactor is pyridoxal 5'-phosphate.

It localises to the cytoplasm. It carries out the reaction (6R)-5,10-methylene-5,6,7,8-tetrahydrofolate + glycine + H2O = (6S)-5,6,7,8-tetrahydrofolate + L-serine. The protein operates within one-carbon metabolism; tetrahydrofolate interconversion. Its pathway is amino-acid biosynthesis; glycine biosynthesis; glycine from L-serine: step 1/1. Its function is as follows. Catalyzes the reversible interconversion of serine and glycine with tetrahydrofolate (THF) serving as the one-carbon carrier. This reaction serves as the major source of one-carbon groups required for the biosynthesis of purines, thymidylate, methionine, and other important biomolecules. Also exhibits THF-independent aldolase activity toward beta-hydroxyamino acids, producing glycine and aldehydes, via a retro-aldol mechanism. The protein is Serine hydroxymethyltransferase of Syntrophotalea carbinolica (strain DSM 2380 / NBRC 103641 / GraBd1) (Pelobacter carbinolicus).